An 825-amino-acid chain; its full sequence is Translation initiation factor IF-2 (825 aa).

Composition is skewed to basic and acidic residues over residues 1–19 (MTKK…DNKK), 35–45 (RKGEKKTEGKR), 70–98 (LLKD…EYKK), and 113–122 (KKVESVEKPA). Residues 1-239 (MTKKQENETS…TQRKDRPLPE (239 aa)) are disordered. The segment covering 158–169 (PSSSRRPSSRPS) has biased composition (low complexity). Basic residues predominate over residues 181–191 (GRRRKSGKPGR). Over residues 194-208 (QNSYADQGRGANSNR) the composition is skewed to polar residues. The segment covering 211–220 (QRKRKNKKHQ) has biased composition (basic residues). Residues 326-495 (VRPPVVTIMG…ILEADMLELK (170 aa)) enclose the tr-type G domain. The segment at 335–342 (GHVDHGKT) is G1. 335–342 (GHVDHGKT) is a binding site for GTP. Residues 360–364 (GITQN) form a G2 region. A G3 region spans residues 381–384 (DTPG). GTP contacts are provided by residues 381 to 385 (DTPGH) and 435 to 438 (NKMD). Residues 435–438 (NKMD) are G4. The G5 stretch occupies residues 471–473 (SAK).

This sequence belongs to the TRAFAC class translation factor GTPase superfamily. Classic translation factor GTPase family. IF-2 subfamily.

It is found in the cytoplasm. Its function is as follows. One of the essential components for the initiation of protein synthesis. Protects formylmethionyl-tRNA from spontaneous hydrolysis and promotes its binding to the 30S ribosomal subunits. Also involved in the hydrolysis of GTP during the formation of the 70S ribosomal complex. The sequence is that of Translation initiation factor IF-2 from Lactobacillus delbrueckii subsp. bulgaricus (strain ATCC BAA-365 / Lb-18).